The primary structure comprises 177 residues: Large ribosomal subunit protein uL6 (177 aa).

It belongs to the universal ribosomal protein uL6 family. In terms of assembly, part of the 50S ribosomal subunit.

Its function is as follows. This protein binds to the 23S rRNA, and is important in its secondary structure. It is located near the subunit interface in the base of the L7/L12 stalk, and near the tRNA binding site of the peptidyltransferase center. The chain is Large ribosomal subunit protein uL6 from Aromatoleum aromaticum (strain DSM 19018 / LMG 30748 / EbN1) (Azoarcus sp. (strain EbN1)).